Here is a 210-residue protein sequence, read N- to C-terminus: MATDSTQCVKKSRGRPKVFDRDAALDKAMKLFWQHGYEATSLADLVEATGAKAPTLYAEFTNKEGLFRAVLDRYIDRFAAKHEAQLFCEEKSVESALADYFAAIANCFTSKDTPAGCFMINNCTTLSPDSGDIANTLKSRHAMQERTLQQFLCQRQARGEIPPHCDVTHLAEFLNCIIQGMSISAREGASLEKLMQIAGTTLRLWPELVK.

In terms of domain architecture, HTH tetR-type spans 18-78 (VFDRDAALDK…AVLDRYIDRF (61 aa)). The segment at residues 41–60 (SLADLVEATGAKAPTLYAEF) is a DNA-binding region (H-T-H motif).

Its activity is regulated as follows. Binding to the promoter region of BhsA/ComC is released in the presence of copper. In terms of biological role, represses expression of BhsA/ComC by binding to its promoter region in the absence of copper. The sequence is that of HTH-type transcriptional repressor ComR (comR) from Escherichia coli (strain K12).